Consider the following 97-residue polypeptide: Acylphosphatase (97 aa).

Residues 5–92 form the Acylphosphatase-like domain; sequence RAHVWISGRV…GEFVRFEITF (88 aa). Active-site residues include arginine 20 and asparagine 38.

Belongs to the acylphosphatase family.

It carries out the reaction an acyl phosphate + H2O = a carboxylate + phosphate + H(+). This Syntrophobacter fumaroxidans (strain DSM 10017 / MPOB) protein is Acylphosphatase (acyP).